A 326-amino-acid chain; its full sequence is Malate dehydrogenase (326 aa).

An NAD(+)-binding site is contributed by 11–17 (GAAGQIG). Arginine 92 and arginine 98 together coordinate substrate. Residues asparagine 105, glutamine 112, and 129-131 (VGN) each bind NAD(+). 2 residues coordinate substrate: asparagine 131 and arginine 162. Catalysis depends on histidine 187, which acts as the Proton acceptor.

The protein belongs to the LDH/MDH superfamily. MDH type 2 family.

It catalyses the reaction (S)-malate + NAD(+) = oxaloacetate + NADH + H(+). Catalyzes the reversible oxidation of malate to oxaloacetate. The sequence is that of Malate dehydrogenase from Halorhodospira halophila (strain DSM 244 / SL1) (Ectothiorhodospira halophila (strain DSM 244 / SL1)).